The primary structure comprises 665 residues: DNA mismatch repair protein MutL (665 aa).

It belongs to the DNA mismatch repair MutL/HexB family.

This protein is involved in the repair of mismatches in DNA. It is required for dam-dependent methyl-directed DNA mismatch repair. May act as a 'molecular matchmaker', a protein that promotes the formation of a stable complex between two or more DNA-binding proteins in an ATP-dependent manner without itself being part of a final effector complex. The chain is DNA mismatch repair protein MutL from Acidobacterium capsulatum (strain ATCC 51196 / DSM 11244 / BCRC 80197 / JCM 7670 / NBRC 15755 / NCIMB 13165 / 161).